We begin with the raw amino-acid sequence, 583 residues long: Probable GTP diphosphokinase CRSH, chloroplastic (583 aa).

The N-terminal 58 residues, 1–58, are a transit peptide targeting the chloroplast; it reads MSVIRPSPIPIPRCRSQVLHRRLYSIQLIQRRRRRWNPRSEVEDTAIESTARSPEAAG. The HD domain maps to 112 to 212; sequence PLSKALSLSI…MDLVSKLDEM (101 aa). EF-hand domains are found at residues 470–505 and 507–539; these read TTTN…LGAP and EDAE…VEFM. 10 residues coordinate Ca(2+): Asp-483, Asn-485, Asp-487, Met-489, Glu-494, Asp-517, Asn-519, Asp-521, Ser-523, and Glu-528.

This sequence belongs to the RelA/SpoT family. Expressed in shoots, cotyledons, rosette and cauline leaves, stems, sepals, pistils and siliques.

It is found in the plastid. It localises to the chloroplast. The catalysed reaction is GTP + ATP = guanosine 3'-diphosphate 5'-triphosphate + AMP. With respect to regulation, activated by calcium. In terms of biological role, possesses calcium-dependent ppGpp (guanosine 3'-diphosphate 5'-diphosphate) synthetase activity in vitro and is able to functionally complement E.coli relA mutants. Plays an important role in the timing adjustment of pistil and pollen maturation required for successful pollination. May be involved in a rapid plant ppGpp-mediated response to pathogens and other stresses. This Arabidopsis thaliana (Mouse-ear cress) protein is Probable GTP diphosphokinase CRSH, chloroplastic (CRSH).